The following is a 114-amino-acid chain: Prefoldin subunit 6 (114 aa).

Residue Ser-2 is modified to N-acetylserine.

Belongs to the prefoldin subunit beta family. In terms of assembly, heterohexamer of two PFD-alpha type and four PFD-beta type subunits.

The protein resides in the nucleus. Functionally, binds specifically to cytosolic chaperonin (c-CPN) and transfers target proteins to it. Binds to nascent polypeptide chain and promotes folding in an environment in which there are many competing pathways for nonnative proteins. This is Prefoldin subunit 6 (YKE2) from Saccharomyces cerevisiae (strain ATCC 204508 / S288c) (Baker's yeast).